The chain runs to 1400 residues: DNA topoisomerase 2 (1400 aa).

The segment covering 1-30 (MSSFESDSASDAESAFSDASSDFTPSSSVK) has biased composition (low complexity). The tract at residues 1–57 (MSSFESDSASDAESAFSDASSDFTPSSSVKSKGKVPLRDSTNTTAQPSAPATGDASD) is disordered. The segment covering 39-57 (DSTNTTAQPSAPATGDASD) has biased composition (polar residues). ATP contacts are provided by residues Asn117, Asn146, 174-176 (SSN), and 187-194 (GRNGYGAK). An interaction with DNA region spans residues 379–386 (TKKEKGKK). Residue 415–417 (QTK) participates in ATP binding. The Toprim domain maps to 497-613 (CTLILTEGDS…GLLEIPGFLL (117 aa)). Mg(2+) is bound by residues Glu503, Asp582, and Asp584. The 466-residue stretch at 749–1214 (IPSILDGFKP…SAKDLWNSDL (466 aa)) folds into the Topo IIA-type catalytic domain. Residue Tyr839 is the O-(5'-phospho-DNA)-tyrosine intermediate of the active site. The interval 1019 to 1028 (KLISSISLSN) is interaction with DNA. A disordered region spans residues 1235-1400 (FGPTAKTSTR…NESDEDYMSE (166 aa)). Low complexity predominate over residues 1262–1271 (SSTPKASTPT). The span at 1312–1321 (PKRKTPKSKP) shows a compositional bias: basic residues. A compositionally biased stretch (acidic residues) spans 1389-1400 (DGNESDEDYMSE).

It belongs to the type II topoisomerase family. As to quaternary structure, homodimer. Requires Mg(2+) as cofactor. Mn(2+) serves as cofactor. Ca(2+) is required as a cofactor.

The protein localises to the nucleus. It catalyses the reaction ATP-dependent breakage, passage and rejoining of double-stranded DNA.. Control of topological states of DNA by transient breakage and subsequent rejoining of DNA strands. Topoisomerase II makes double-strand breaks. In Meyerozyma guilliermondii (strain ATCC 6260 / CBS 566 / DSM 6381 / JCM 1539 / NBRC 10279 / NRRL Y-324) (Yeast), this protein is DNA topoisomerase 2 (TOP2).